The following is a 543-amino-acid chain: Chaperonin GroEL (543 aa).

Residues 29–32, Lys-50, 86–90, Gly-415, and Asp-495 each bind ATP; these read TLGP and DGTTT.

This sequence belongs to the chaperonin (HSP60) family. Forms a cylinder of 14 subunits composed of two heptameric rings stacked back-to-back. Interacts with the co-chaperonin GroES.

It is found in the cytoplasm. It catalyses the reaction ATP + H2O + a folded polypeptide = ADP + phosphate + an unfolded polypeptide.. Its function is as follows. Together with its co-chaperonin GroES, plays an essential role in assisting protein folding. The GroEL-GroES system forms a nano-cage that allows encapsulation of the non-native substrate proteins and provides a physical environment optimized to promote and accelerate protein folding. The sequence is that of Chaperonin GroEL from Flavobacterium johnsoniae (strain ATCC 17061 / DSM 2064 / JCM 8514 / BCRC 14874 / CCUG 350202 / NBRC 14942 / NCIMB 11054 / UW101) (Cytophaga johnsonae).